The sequence spans 177 residues: Parathyroid hormone-related protein (177 aa).

The N-terminal stretch at 1-24 is a signal peptide; sequence MLRRLVQQWGVAVFLLSYSVPSCG. A propeptide spanning residues 25–34 is cleaved from the precursor; sequence RSVEELGRRL. The tract at residues 57 to 68 is important for receptor binding; sequence RFFLHHLIAEIH. The segment at 74–177 is disordered; the sequence is ATSEVSPNSK…TSLELNLRRH (104 aa). Positions 76–90 are enriched in polar residues; the sequence is SEVSPNSKPAPNTKN. The Nuclear localization signal motif lies at 108-129; sequence TNKVETYKEQPLKTPGKKKKGK. Positions 109–118 are enriched in basic and acidic residues; sequence NKVETYKEQP. Positions 122 to 132 are enriched in basic residues; the sequence is PGKKKKGKPGK.

Belongs to the parathyroid hormone family. As to quaternary structure, PTHrP interacts with PTH1R (via N-terminal extracellular domain). Post-translationally, there are several secretory forms, including osteostatin, arising from endoproteolytic cleavage of the initial translation product. Each of these secretory forms is believed to have one or more of its own receptors that mediates the normal paracrine, autocrine and endocrine actions.

It is found in the secreted. It localises to the cytoplasm. The protein localises to the nucleus. Its function is as follows. Neuroendocrine peptide which is a critical regulator of cellular and organ growth, development, migration, differentiation and survival and of epithelial calcium ion transport. Acts by binding to its receptor, PTH1R, activating G protein-coupled receptor signaling. Regulates endochondral bone development and epithelial-mesenchymal interactions during the formation of the mammary glands and teeth. Required for skeletal homeostasis. Promotes mammary mesenchyme differentiation and bud outgrowth by modulating mesenchymal cell responsiveness to BMPs. Up-regulates BMPR1A expression in the mammary mesenchyme and this increases the sensitivity of these cells to BMPs and allows them to respond to BMP4 in a paracrine and/or autocrine fashion. BMP4 signaling in the mesenchyme, in turn, triggers epithelial outgrowth and augments MSX2 expression, which causes the mammary mesenchyme to inhibit hair follicle formation within the nipple sheath. Potent inhibitor of osteoclastic bone resorption. The chain is Parathyroid hormone-related protein (PTHLH) from Canis lupus familiaris (Dog).